The following is a 402-amino-acid chain: 4-hydroxy-3-methylbut-2-enyl diphosphate reductase (402 aa).

Cys-66 contributes to the [4Fe-4S] cluster binding site. (2E)-4-hydroxy-3-methylbut-2-enyl diphosphate is bound at residue His-96. Position 96 (His-96) interacts with dimethylallyl diphosphate. Residue His-96 coordinates isopentenyl diphosphate. Cys-157 contacts [4Fe-4S] cluster. His-185 contacts (2E)-4-hydroxy-3-methylbut-2-enyl diphosphate. Dimethylallyl diphosphate is bound at residue His-185. His-185 is an isopentenyl diphosphate binding site. Glu-187 functions as the Proton donor in the catalytic mechanism. Residue Thr-250 participates in (2E)-4-hydroxy-3-methylbut-2-enyl diphosphate binding. [4Fe-4S] cluster is bound at residue Cys-288. Positions 317, 318, 319, and 379 each coordinate (2E)-4-hydroxy-3-methylbut-2-enyl diphosphate. Residues Ser-317, Ser-318, Asn-319, and Ser-379 each coordinate dimethylallyl diphosphate. Isopentenyl diphosphate is bound by residues Ser-317, Ser-318, Asn-319, and Ser-379.

This sequence belongs to the IspH family. The cofactor is [4Fe-4S] cluster.

It catalyses the reaction isopentenyl diphosphate + 2 oxidized [2Fe-2S]-[ferredoxin] + H2O = (2E)-4-hydroxy-3-methylbut-2-enyl diphosphate + 2 reduced [2Fe-2S]-[ferredoxin] + 2 H(+). It carries out the reaction dimethylallyl diphosphate + 2 oxidized [2Fe-2S]-[ferredoxin] + H2O = (2E)-4-hydroxy-3-methylbut-2-enyl diphosphate + 2 reduced [2Fe-2S]-[ferredoxin] + 2 H(+). It functions in the pathway isoprenoid biosynthesis; dimethylallyl diphosphate biosynthesis; dimethylallyl diphosphate from (2E)-4-hydroxy-3-methylbutenyl diphosphate: step 1/1. It participates in isoprenoid biosynthesis; isopentenyl diphosphate biosynthesis via DXP pathway; isopentenyl diphosphate from 1-deoxy-D-xylulose 5-phosphate: step 6/6. Functionally, catalyzes the conversion of 1-hydroxy-2-methyl-2-(E)-butenyl 4-diphosphate (HMBPP) into a mixture of isopentenyl diphosphate (IPP) and dimethylallyl diphosphate (DMAPP). Acts in the terminal step of the DOXP/MEP pathway for isoprenoid precursor biosynthesis. The polypeptide is 4-hydroxy-3-methylbut-2-enyl diphosphate reductase (Nostoc punctiforme (strain ATCC 29133 / PCC 73102)).